Consider the following 590-residue polypeptide: Aspartate--tRNA ligase (590 aa).

Glu-180 is an L-aspartate binding site. The aspartate stretch occupies residues 204 to 207 (QLFK). Arg-226 lines the L-aspartate pocket. ATP is bound by residues 226 to 228 (RDE) and Gln-235. His-454 is an L-aspartate binding site. Glu-488 is a binding site for ATP. Position 495 (Arg-495) interacts with L-aspartate. ATP is bound at residue 540–543 (GFDR).

This sequence belongs to the class-II aminoacyl-tRNA synthetase family. Type 1 subfamily. Homodimer.

The protein localises to the cytoplasm. It catalyses the reaction tRNA(Asp) + L-aspartate + ATP = L-aspartyl-tRNA(Asp) + AMP + diphosphate. Functionally, catalyzes the attachment of L-aspartate to tRNA(Asp) in a two-step reaction: L-aspartate is first activated by ATP to form Asp-AMP and then transferred to the acceptor end of tRNA(Asp). The protein is Aspartate--tRNA ligase of Clostridium kluyveri (strain NBRC 12016).